A 553-amino-acid chain; its full sequence is ATP synthase F(1) complex subunit alpha, mitochondrial (553 aa).

Residues 1 to 43 (MLSVRVAAAVVRALPRRAGLVSRNALGSSFIAARNFHASNTHL) constitute a mitochondrion transit peptide. Phosphoserine is present on residues serine 53 and serine 65. At serine 76 the chain carries Phosphoserine; alternate. Serine 76 carries an O-linked (GlcNAc) serine; alternate glycan. Serine 106 carries the post-translational modification Phosphoserine. N6-acetyllysine occurs at positions 123, 126, and 132. Residue threonine 134 is modified to Phosphothreonine. Lysine 161 is subject to N6-acetyllysine; alternate. Position 161 is an N6-succinyllysine; alternate (lysine 161). Serine 166 bears the Phosphoserine mark. An N6-acetyllysine; alternate modification is found at lysine 167. Lysine 167 carries the post-translational modification N6-succinyllysine; alternate. At serine 184 the chain carries Phosphoserine. Omega-N-methylarginine is present on arginine 204. ATP-binding residues include glutamine 215, glycine 217, lysine 218, threonine 219, and serine 220. Mg(2+) is bound at residue threonine 219. 2 positions are modified to N6-acetyllysine; alternate: lysine 230 and lysine 239. An N6-succinyllysine; alternate mark is found at lysine 230 and lysine 239. Lysine 240 carries the post-translational modification N6-acetyllysine. Residues lysine 261 and lysine 305 each carry the N6-acetyllysine; alternate modification. N6-succinyllysine; alternate is present on residues lysine 261 and lysine 305. Mg(2+) is bound at residue aspartate 312. Lysine 427 carries the N6-acetyllysine; alternate modification. Lysine 427 carries the N6-succinyllysine; alternate modification. At lysine 434 the chain carries N6-acetyllysine. Glutamine 473 and glutamine 475 together coordinate ATP. Lysine 498, lysine 506, lysine 531, and lysine 539 each carry N6-acetyllysine; alternate. Residues lysine 498, lysine 506, lysine 531, and lysine 539 each carry the N6-succinyllysine; alternate modification. Lysine 541 carries the post-translational modification N6-acetyllysine.

The protein belongs to the ATPase alpha/beta chains family. In terms of assembly, homotrimer. Component of the ATP synthase complex composed at least of ATP5F1A/subunit alpha, ATP5F1B/subunit beta, ATP5MC1/subunit c (homooctomer), MT-ATP6/subunit a, MT-ATP8/subunit 8, ATP5ME/subunit e, ATP5MF/subunit f, ATP5MG/subunit g, ATP5MK/subunit k, ATP5MJ/subunit j, ATP5F1C/subunit gamma, ATP5F1D/subunit delta, ATP5F1E/subunit epsilon, ATP5PF/subunit F6, ATP5PB/subunit b, ATP5PD/subunit d, ATP5PO/subunit OSCP. ATP synthase complex consists of a soluble F(1) head domain (subunits alpha(3) and beta(3)) - the catalytic core - and a membrane F(0) domain - the membrane proton channel (subunits c, a, 8, e, f, g, k and j). These two domains are linked by a central stalk (subunits gamma, delta, and epsilon) rotating inside the F1 region and a stationary peripheral stalk (subunits F6, b, d, and OSCP). Interacts with ATPAF2. Interacts with HRG; the interaction occurs on the surface of T-cells and alters the cell morphology when associated with concanavalin (in vitro). Interacts with PLG (angiostatin peptide); the interaction inhibits most of the angiogenic properties of angiostatin. Interacts with BLOC1S1. Interacts with BCL2L1 isoform BCL-X(L); the interaction mediates the association of BCL2L1 isoform BCL-X(L) with the mitochondrial membrane F(1)F(0) ATP synthase and enhances neurons metabolic efficiency. Interacts with CLN5 and PPT1. Interacts with S100A1; this interaction increases F1-ATPase activity. Interacts with ABCB7; this interaction allows the regulation of cellular iron homeostasis and cellular reactive oxygen species (ROS) levels in cardiomyocytes. In terms of processing, acetylated on lysine residues. BLOC1S1 is required for acetylation.

It is found in the mitochondrion inner membrane. The protein resides in the cell membrane. Its function is as follows. Subunit alpha, of the mitochondrial membrane ATP synthase complex (F(1)F(0) ATP synthase or Complex V) that produces ATP from ADP in the presence of a proton gradient across the membrane which is generated by electron transport complexes of the respiratory chain. ATP synthase complex consist of a soluble F(1) head domain - the catalytic core - and a membrane F(1) domain - the membrane proton channel. These two domains are linked by a central stalk rotating inside the F(1) region and a stationary peripheral stalk. During catalysis, ATP synthesis in the catalytic domain of F(1) is coupled via a rotary mechanism of the central stalk subunits to proton translocation. In vivo, can only synthesize ATP although its ATP hydrolase activity can be activated artificially in vitro. With the catalytic subunit beta (ATP5F1B), forms the catalytic core in the F(1) domain. Subunit alpha does not bear the catalytic high-affinity ATP-binding sites. The sequence is that of ATP synthase F(1) complex subunit alpha, mitochondrial from Pan troglodytes (Chimpanzee).